The following is a 232-amino-acid chain: 5'-methylthioadenosine/S-adenosylhomocysteine nucleosidase (232 aa).

Residue glutamate 12 is the Proton acceptor of the active site. Substrate contacts are provided by residues glycine 78, isoleucine 152, and 173 to 174 (ME). The Proton donor role is filled by aspartate 197.

This sequence belongs to the PNP/UDP phosphorylase family. MtnN subfamily. Homodimer.

It catalyses the reaction S-adenosyl-L-homocysteine + H2O = S-(5-deoxy-D-ribos-5-yl)-L-homocysteine + adenine. The enzyme catalyses S-methyl-5'-thioadenosine + H2O = 5-(methylsulfanyl)-D-ribose + adenine. The catalysed reaction is 5'-deoxyadenosine + H2O = 5-deoxy-D-ribose + adenine. Its pathway is amino-acid biosynthesis; L-methionine biosynthesis via salvage pathway; S-methyl-5-thio-alpha-D-ribose 1-phosphate from S-methyl-5'-thioadenosine (hydrolase route): step 1/2. Functionally, catalyzes the irreversible cleavage of the glycosidic bond in both 5'-methylthioadenosine (MTA) and S-adenosylhomocysteine (SAH/AdoHcy) to adenine and the corresponding thioribose, 5'-methylthioribose and S-ribosylhomocysteine, respectively. Also cleaves 5'-deoxyadenosine, a toxic by-product of radical S-adenosylmethionine (SAM) enzymes, into 5-deoxyribose and adenine. Thus, is required for in vivo function of the radical SAM enzymes biotin synthase and lipoic acid synthase, that are inhibited by 5'-deoxyadenosine accumulation. The polypeptide is 5'-methylthioadenosine/S-adenosylhomocysteine nucleosidase (Escherichia coli O9:H4 (strain HS)).